Here is a 1323-residue protein sequence, read N- to C-terminus: Sister chromatid cohesion protein PDS5 homolog A-A (1323 aa).

The stretch at 385 to 421 (FLVNDQLLGFVRERTLDKRWRVRKEAMMGLAQLYKKY) is one HEAT repeat. The disordered stretch occupies residues 1139–1323 (LNATGRRPYS…TAQRQIDLHR (185 aa)). Over residues 1153–1165 (SEISNNVSINSES) the composition is skewed to low complexity. 2 stretches are compositionally biased toward polar residues: residues 1166–1176 (DASVANRQSSE) and 1210–1220 (LDQTAPSNTGT). Residues 1235–1246 (NIRKESEEKKAD) are compositionally biased toward basic and acidic residues.

In terms of assembly, interacts with the cohesin complex. Binds chromatin in a cohesin-dependent manner.

It localises to the nucleus. Functionally, may regulate sister chromatid cohesion during mitosis and couple it to DNA replication. The polypeptide is Sister chromatid cohesion protein PDS5 homolog A-A (pds5a-a) (Xenopus laevis (African clawed frog)).